We begin with the raw amino-acid sequence, 435 residues long: Polyadenylate-binding protein RBP47B (435 aa).

Over residues 1–15 (MQTTNGSDSTLATSG) the composition is skewed to polar residues. Disordered regions lie at residues 1 to 41 (MQTT…QQWM) and 85 to 104 (YGSYQQHQHQQHKAIDRGSG). The segment covering 29–41 (QWQQQQQQQQQWM) has biased composition (low complexity). RRM domains are found at residues 108-188 (KTLW…WASF), 202-281 (LSVF…IATP), and 321-393 (ATIF…WGRS). Residues 392-412 (RSPNKQWRGDSGQQWNGGYSR) are disordered.

Belongs to the polyadenylate-binding RBP47 family. Interacts with the poly(A) tail of mRNA in nucleus. Expressed at low levels in leaves, stems, flowers, and seedlings.

The protein localises to the nucleus. Its subcellular location is the cytoplasmic granule. Its function is as follows. Heterogeneous nuclear ribonucleoprotein (hnRNP)-protein binding the poly(A) tail of mRNA and probably involved in some steps of pre-mRNA maturation. The protein is Polyadenylate-binding protein RBP47B (RBP47B) of Arabidopsis thaliana (Mouse-ear cress).